Consider the following 129-residue polypeptide: Fluoride-specific ion channel FluC 2 (129 aa).

Helical transmembrane passes span 3-23 (FLYVGVFGALGGMCRYAMNLW), 32-52 (ATLAVNLIGCFLLAFLMQFLA), 59-79 (LVILNGIGTGFIGAFTTFSAF), and 90-110 (GAWLFAVSYVLASFIGGLIMV). Residues Gly-71 and Thr-74 each contribute to the Na(+) site.

The protein belongs to the fluoride channel Fluc/FEX (TC 1.A.43) family.

It is found in the cell membrane. It catalyses the reaction fluoride(in) = fluoride(out). Na(+) is not transported, but it plays an essential structural role and its presence is essential for fluoride channel function. Fluoride-specific ion channel. Important for reducing fluoride concentration in the cell, thus reducing its toxicity. The sequence is that of Fluoride-specific ion channel FluC 2 from Listeria monocytogenes serotype 4b (strain F2365).